Here is a 450-residue protein sequence, read N- to C-terminus: Phosphoglucosamine mutase (450 aa).

Residue Ser-102 is the Phosphoserine intermediate of the active site. 4 residues coordinate Mg(2+): Ser-102, Asp-243, Asp-245, and Asp-247. Ser-102 is subject to Phosphoserine.

It belongs to the phosphohexose mutase family. It depends on Mg(2+) as a cofactor. Activated by phosphorylation.

The enzyme catalyses alpha-D-glucosamine 1-phosphate = D-glucosamine 6-phosphate. Functionally, catalyzes the conversion of glucosamine-6-phosphate to glucosamine-1-phosphate. This chain is Phosphoglucosamine mutase, found in Allorhizobium ampelinum (strain ATCC BAA-846 / DSM 112012 / S4) (Agrobacterium vitis (strain S4)).